Consider the following 467-residue polypeptide: MVLDSGTQVYEQAPPRPPAGSPSQHHKLKPSNGNGPPLYPWPESLGMPLALAVPSALQQQTMWQTFSKLHLEQSSHMRRSESTYSVNSTGRRGRGKAPIGRGCDPGGTLRPAASLPHIAKIRKDVGSSSSKSPCMLVALRPTNMDQEREKFFQSHYTYNPQFEYQEPMPMSVLEKYQEASAQFMNQAVGIIEAVLEKFGTYENFEAATGGQLLTKCQIWSTVRKYMQKEGCVGEIVVQLSEDLLSQAVMMVENSRPTLAINLTGARQYWLEGMLRHEIGTHYLRGVNNSRQPWHSTEGRLQYGLQPANPTEEGLASLHSVLFRKQPFLWRAALLYYTIHQAAHMSFRQLFQDLAQYVQDEGVRWEYCVRAKRGQTDTSQPGCFSKDQVYLDGILRILRHRHTIDFQLLTSLGKVSYEDVEQLRPYGVLDNTRVPHFMKDLERYRQQLEHIMTTNRLDEAELGRLLPD.

Over residues 1–10 (MVLDSGTQVY) the composition is skewed to polar residues. Disordered stretches follow at residues 1-40 (MVLD…PLYP) and 77-111 (MRRS…TLRP). Position 276 (H276) interacts with Zn(2+). E277 acts as the Nucleophile in catalysis. Positions 281 and 312 each coordinate Zn(2+).

The protein belongs to the peptidase MATCAP family. Requires Zn(2+) as cofactor.

It is found in the cytoplasm. The protein localises to the cytoskeleton. It catalyses the reaction C-terminal L-alpha-aminoacyl-L-glutamyl-L-glutamyl-L-tyrosyl-[tubulin] + H2O = C-terminal L-alpha-aminoacyl-L-glutamyl-L-glutamyl-[tubulin] + L-tyrosine. The catalysed reaction is C-terminal L-alpha-aminoacyl-L-glutamyl-L-glutamyl-L-phenylalanyl-[tubulin] + H2O = C-terminal L-alpha-aminoacyl-L-glutamyl-L-glutamyl-[tubulin] + L-phenylalanine. Tyrosine carboxypeptidase that removes the C-terminal tyrosine residue of alpha-tubulin, thereby regulating microtubule dynamics and function. Also able to remove the C-terminal phenylalanine residue of alpha-tubulin TUBA8. Recognizes adjacent tubulin dimers along the same protofilament. The sequence is that of Microtubule-associated tyrosine carboxypeptidase 1 from Mus musculus (Mouse).